The sequence spans 660 residues: Junctophilin-1 (660 aa).

At 1-638 (MTGGRFDFDD…EKEANSGPNS (638 aa)) the chain is on the cytoplasmic side. MORN repeat units lie at residues 14–36 (YCGGWEEGKAHGHGICTGPKGQG), 38–59 (YSGSWSHGFEVVGVYTWPSGNT), 60–82 (YQGYWAQGKRHGLGVETKGKWMY), 106–128 (YEGTWSNGLQDGYGVETYGDGGT), and 129–151 (YQGQWAGGMRHGYGVRQSVPYGM). Residues serine 157, serine 216, and serine 220 each carry the phosphoserine modification. Residues 228–247 (SKSSISSKRSSVRSDAAMSR) form a disordered region. MORN repeat units follow at residues 281–303 (YMGEWKNDKRNGFGISERSNGMK) and 304–326 (YEGEWANNKRHGYGCTVFPDGSK). The span at 437–454 (NPEEKVLEKPPSPKESPH) shows a compositional bias: basic and acidic residues. The disordered stretch occupies residues 437–631 (NPEEKVLEKP…NDTCPSLEKE (195 aa)). The residue at position 452 (serine 452) is a Phosphoserine. Threonine 461 carries the post-translational modification Phosphothreonine. 3 positions are modified to phosphoserine: serine 465, serine 469, and serine 475. A compositionally biased stretch (low complexity) spans 466–477 (PESSPKQSHSPQ). Composition is skewed to basic and acidic residues over residues 562 to 571 (PPEDREDDRG) and 598 to 612 (VAKESKTEPKAKKSE). A helical; Anchor for type IV membrane protein membrane pass occupies residues 639 to 659 (IMIVLVMLLNIGLAILFVHFL).

This sequence belongs to the junctophilin family. As to expression, specifically expressed in skeletal muscle. Weakly expressed in embryos and neonates. Abundant in young adult muscles.

It localises to the cell membrane. Its subcellular location is the endoplasmic reticulum membrane. The protein localises to the sarcoplasmic reticulum membrane. In terms of biological role, junctophilins contribute to the formation of junctional membrane complexes (JMCs) which link the plasma membrane with the endoplasmic or sarcoplasmic reticulum in excitable cells. Provides a structural foundation for functional cross-talk between the cell surface and intracellular calcium release channels. JPH1 contributes to the construction of the skeletal muscle triad by linking the t-tubule (transverse-tubule) and SR (sarcoplasmic reticulum) membranes. This is Junctophilin-1 (Jph1) from Mus musculus (Mouse).